The primary structure comprises 449 residues: TNF receptor-associated factor family protein DDB_G0272340 (449 aa).

The RING-type; degenerate zinc-finger motif lies at 33–76; the sequence is CPICEECIMDVNKCEALQCKEGHVHCRLCWMKSLESKKECMTCR. TRAF-type zinc fingers lie at residues 133–187 and 189–251; these read GHIK…IDDS and VHYS…SELS. Positions 263 to 309 form a coiled coil; sequence MEATIDQHICKFEKSEKEYKKLELEYNRLKDDFKILQSELKVIRELK. One can recognise an MATH domain in the interval 311-437; sequence NYQNKWVITN…QNSVTLNINI (127 aa).

The protein belongs to the TNF receptor-associated factor family. A subfamily.

The protein localises to the cytoplasm. Probable adapter protein and signal transducer that links members of the tumor necrosis factor receptor family to different signaling pathways by association with the receptor cytoplasmic domain and kinases. The protein is TNF receptor-associated factor family protein DDB_G0272340 of Dictyostelium discoideum (Social amoeba).